A 479-amino-acid polypeptide reads, in one-letter code: MSPQTETKASVGFKAGVKEYKLTYYTPEYETKDTDILAAFRVTPQPGVPPEEAGAAVAAESSTGTWTTVWTDGLTSLDRYKGRCYHIEPVPGEETQFIAYVAYPLDLFEEGSVTNMFTSIVGNVFGFKALAALRLEDLRIPPAYTKTFQGPPHGIQVERDKLNKYGRPLLGCTIKPKLGLSAKNYGRAVYECLRGGLDFTKDDENVNSQPFMRWRDRFLFCAEAIYKSQAETGEIKGHYLNATAGTCEEMIKRAVFARELGVPIVMHDYLTGGFTANTSLSHYCRDNGLLLHIHRAMHAVIDRQKNHGMHFRVLAKALRLSGGDHIHAGTVVGKLEGDRESTLGFVDLLRDDYVEKDRSRGIFFTQDWVSLPGVLPVASGGIHVWHMPALTEIFGDDSVLQFGGGTLGHPWGNAPGAVANRVALEACVQARNEGRDLAVEGNEIIREACKWSPELAAACEVWKEITFNFPTIDKLDGQE.

Positions 1–2 are excised as a propeptide; sequence MS. Proline 3 bears the N-acetylproline mark. Substrate is bound by residues threonine 65, asparagine 123, 173-177, and 201-204; these read TIKPK and KDDE. Lysine 175 acts as the Proton acceptor in catalysis. Positions 201, 203, and 204 each coordinate Mg(2+). Lysine 201 bears the N6-carboxylysine mark. A Phosphoserine modification is found at serine 208. Residue histidine 294 is the Proton acceptor of the active site. Substrate contacts are provided by residues 294–295 and histidine 327; that span reads HR. Threonine 330 bears the Phosphothreonine mark. Residues lysine 334 and 379–381 contribute to the substrate site; that span reads SGG.

It belongs to the RuBisCO large chain family. Type I subfamily. In terms of assembly, heterohexadecamer of 8 large chains and 8 small chains; disulfide-linked. The disulfide link is formed within the large subunit homodimers. Interacts with RBCX1 and RBCX1. An intermediate complex made of eight RbcL subunits interacts with the chaperone BSD2. Mg(2+) is required as a cofactor. Post-translationally, the disulfide bond which can form in the large chain dimeric partners within the hexadecamer appears to be associated with oxidative stress and protein turnover.

The protein localises to the plastid. It is found in the chloroplast. It carries out the reaction 2 (2R)-3-phosphoglycerate + 2 H(+) = D-ribulose 1,5-bisphosphate + CO2 + H2O. The enzyme catalyses D-ribulose 1,5-bisphosphate + O2 = 2-phosphoglycolate + (2R)-3-phosphoglycerate + 2 H(+). Its function is as follows. RuBisCO catalyzes two reactions: the carboxylation of D-ribulose 1,5-bisphosphate, the primary event in carbon dioxide fixation, as well as the oxidative fragmentation of the pentose substrate in the photorespiration process. Both reactions occur simultaneously and in competition at the same active site. Binds to abscisic acid (ABA). This chain is Ribulose bisphosphate carboxylase large chain, found in Arabidopsis thaliana (Mouse-ear cress).